The following is a 121-amino-acid chain: Ribonuclease P protein component (121 aa).

This sequence belongs to the RnpA family. Consists of a catalytic RNA component (M1 or rnpB) and a protein subunit.

It catalyses the reaction Endonucleolytic cleavage of RNA, removing 5'-extranucleotides from tRNA precursor.. Functionally, RNaseP catalyzes the removal of the 5'-leader sequence from pre-tRNA to produce the mature 5'-terminus. It can also cleave other RNA substrates such as 4.5S RNA. The protein component plays an auxiliary but essential role in vivo by binding to the 5'-leader sequence and broadening the substrate specificity of the ribozyme. This chain is Ribonuclease P protein component, found in Coxiella burnetii (strain Dugway 5J108-111).